The sequence spans 723 residues: Aminodeoxychorismate synthase (723 aa).

Residues 2–195 form the Glutamine amidotransferase type-1 domain; that stretch reads RTLLVDNYDS…RDLTERHGRT (194 aa). Catalysis depends on C82, which acts as the Nucleophile. The interval 96-117 is disordered; it reads VGRAPEPRHGRTSAVRHDGTGL. A compositionally biased stretch (basic and acidic residues) spans 98 to 114; it reads RAPEPRHGRTSAVRHDG. Active-site residues include H169 and E171. Disordered regions lie at residues 192-219 and 693-723; these read HGRT…KATT and FPGR…VLPG. The segment at 255-723 is PABB component; sequence LDSSRPGGEL…GAPKDLVLPG (469 aa). Positions 695-704 are enriched in basic and acidic residues; it reads GRERPGKDLD.

This sequence in the C-terminal section; belongs to the anthranilate synthase component I family.

It carries out the reaction chorismate + L-glutamine = 4-amino-4-deoxychorismate + L-glutamate. It participates in antibiotic biosynthesis; candicidin biosynthesis. Its function is as follows. Involved in candicidin biosynthesis. Catalyzes the biosynthesis of 4-amino-4-deoxychorismate (ADC) from chorismate and glutamine. The sequence is that of Aminodeoxychorismate synthase from Streptomyces griseus.